The chain runs to 178 residues: Protein GrpE (178 aa).

This sequence belongs to the GrpE family. Homodimer.

The protein resides in the cytoplasm. Its function is as follows. Participates actively in the response to hyperosmotic and heat shock by preventing the aggregation of stress-denatured proteins, in association with DnaK and GrpE. It is the nucleotide exchange factor for DnaK and may function as a thermosensor. Unfolded proteins bind initially to DnaJ; upon interaction with the DnaJ-bound protein, DnaK hydrolyzes its bound ATP, resulting in the formation of a stable complex. GrpE releases ADP from DnaK; ATP binding to DnaK triggers the release of the substrate protein, thus completing the reaction cycle. Several rounds of ATP-dependent interactions between DnaJ, DnaK and GrpE are required for fully efficient folding. The polypeptide is Protein GrpE (Bordetella avium (strain 197N)).